The primary structure comprises 269 residues: Intron-associated endonuclease 3 (269 aa).

This endonuclease is specific to the nrdB gene splice junction and is involved in intron homing. This chain is Intron-associated endonuclease 3 (ITEVIIIR), found in Enterobacteria phage RB3 (Bacteriophage RB3).